A 688-amino-acid polypeptide reads, in one-letter code: Glycine--tRNA ligase beta subunit (688 aa).

The protein belongs to the class-II aminoacyl-tRNA synthetase family. As to quaternary structure, tetramer of two alpha and two beta subunits.

It localises to the cytoplasm. The catalysed reaction is tRNA(Gly) + glycine + ATP = glycyl-tRNA(Gly) + AMP + diphosphate. This is Glycine--tRNA ligase beta subunit from Clostridioides difficile (strain 630) (Peptoclostridium difficile).